The following is a 95-amino-acid chain: MNFRPLHDRVLVRRVAAEEKTAGGIIIPDTAKEKPQEGEVIAAGNGTHSEDGKVVPLDVKAGDRVLFGKWSGTEVRVDGEDLLIMKESDILGIIS.

Belongs to the GroES chaperonin family. Heptamer of 7 subunits arranged in a ring. Interacts with the chaperonin GroEL.

It localises to the cytoplasm. Functionally, together with the chaperonin GroEL, plays an essential role in assisting protein folding. The GroEL-GroES system forms a nano-cage that allows encapsulation of the non-native substrate proteins and provides a physical environment optimized to promote and accelerate protein folding. GroES binds to the apical surface of the GroEL ring, thereby capping the opening of the GroEL channel. This Zymomonas mobilis subsp. mobilis (strain ATCC 31821 / ZM4 / CP4) protein is Co-chaperonin GroES.